The following is a 235-amino-acid chain: Adapter protein MecA (235 aa).

A compositionally biased stretch (basic and acidic residues) spans 113–135 (LRQSDKGDIVKSKVSSSDHKDGS). Residues 113 to 136 (LRQSDKGDIVKSKVSSSDHKDGSQ) are disordered.

The protein belongs to the MecA family. In terms of assembly, homodimer.

Its function is as follows. Enables the recognition and targeting of unfolded and aggregated proteins to the ClpC protease or to other proteins involved in proteolysis. In Leuconostoc mesenteroides subsp. mesenteroides (strain ATCC 8293 / DSM 20343 / BCRC 11652 / CCM 1803 / JCM 6124 / NCDO 523 / NBRC 100496 / NCIMB 8023 / NCTC 12954 / NRRL B-1118 / 37Y), this protein is Adapter protein MecA.